Consider the following 76-residue polypeptide: NADH-ubiquinone oxidoreductase chain 4L (76 aa).

Helical transmembrane passes span 1–21 (MTPV…GLAF), 29–49 (ALLC…LWAL), and 56–76 (YSVA…AGLA).

Belongs to the complex I subunit 4L family.

It localises to the mitochondrion membrane. The enzyme catalyses a ubiquinone + NADH + 5 H(+)(in) = a ubiquinol + NAD(+) + 4 H(+)(out). Its function is as follows. Core subunit of the mitochondrial membrane respiratory chain NADH dehydrogenase (Complex I) which catalyzes electron transfer from NADH through the respiratory chain, using ubiquinone as an electron acceptor. Part of the enzyme membrane arm which is embedded in the lipid bilayer and involved in proton translocation. The sequence is that of NADH-ubiquinone oxidoreductase chain 4L (MT-ND4L) from Oncorhynchus masou (Cherry salmon).